Reading from the N-terminus, the 82-residue chain is Immediate early response 3-interacting protein 1 (82 aa).

2 helical membrane-spanning segments follow: residues 2–22 (AFTLYSLLQAALLCVNAIAVL) and 62–82 (VMRVPLIIVNSIAIVLLLLFG).

The protein belongs to the YOS1 family.

The protein resides in the endoplasmic reticulum membrane. Regulator of endoplasmic reticulum secretion that acts as a key determinant of brain size. Required for secretion of extracellular matrix proteins. Required for correct brain development by depositing sufficient extracellular matrix proteins for tissue integrity and the proliferation of neural progenitors. Acts as a regulator of the unfolded protein response (UPR). The protein is Immediate early response 3-interacting protein 1 of Bos taurus (Bovine).